We begin with the raw amino-acid sequence, 252 residues long: Deoxyuridine 5'-triphosphate nucleotidohydrolase, mitochondrial (252 aa).

The transit peptide at 1–69 (MTPLCPRPAL…AGRLSQGCRG (69 aa)) directs the protein to the mitochondrion. 3 positions are modified to phosphoserine: Cys-11, Ser-88, and Ser-99. The interval 78–104 (WKGELPKAGGSPAPGPETPAISPSKRA) is disordered. Residues 173–175 (RSG), 187–193 (GVIDEDY), Gly-198, Arg-241, and 246–247 (FG) each bind dUTP.

The protein belongs to the dUTPase family. As to quaternary structure, homotrimer. Mg(2+) serves as cofactor. In terms of processing, nuclear isoform 2 is phosphorylated in vivo on Ser-11, a reaction that can be catalyzed in vitro by CDC2. Phosphorylation in mature T-cells occurs in a cell cycle-dependent manner. Isoform 3 is not phosphorylated. Found in a variety of tissues. Isoform 3 expression is constitutive, while isoform 2 expression correlates with the onset of DNA replication (at protein level). Isoform 2 degradation coincides with the cessation of nuclear DNA replication (at protein level).

The protein resides in the nucleus. Its subcellular location is the mitochondrion. The enzyme catalyses dUTP + H2O = dUMP + diphosphate + H(+). The protein operates within pyrimidine metabolism; dUMP biosynthesis; dUMP from dCTP (dUTP route): step 2/2. With respect to regulation, phosphorylation is necessary for activity. Catalyzes the cleavage of 2'-deoxyuridine 5'-triphosphate (dUTP) into 2'-deoxyuridine 5'-monophosphate (dUMP) and inorganic pyrophosphate and through its action efficiently prevents uracil misincorporation into DNA and at the same time provides dUMP, the substrate for de novo thymidylate biosynthesis. Inhibits peroxisome proliferator-activated receptor (PPAR) activity by binding of its N-terminal to PPAR, preventing the latter's dimerization with retinoid X receptor. Essential for embryonic development. This chain is Deoxyuridine 5'-triphosphate nucleotidohydrolase, mitochondrial (DUT), found in Homo sapiens (Human).